Reading from the N-terminus, the 498-residue chain is Cysteine--tRNA ligase (498 aa).

Cysteine 44 provides a ligand contact to Zn(2+). The 'HIGH' region signature appears at 46–56 (PTVYSDAHLGH). Residues cysteine 235, histidine 260, and glutamate 264 each coordinate Zn(2+). Residues 291-295 (KMSKS) carry the 'KMSKS' region motif. Lysine 294 is a binding site for ATP.

The protein belongs to the class-I aminoacyl-tRNA synthetase family. In terms of assembly, monomer. It depends on Zn(2+) as a cofactor.

It is found in the cytoplasm. It carries out the reaction tRNA(Cys) + L-cysteine + ATP = L-cysteinyl-tRNA(Cys) + AMP + diphosphate. The chain is Cysteine--tRNA ligase (cysS) from Deinococcus radiodurans (strain ATCC 13939 / DSM 20539 / JCM 16871 / CCUG 27074 / LMG 4051 / NBRC 15346 / NCIMB 9279 / VKM B-1422 / R1).